The following is a 387-amino-acid chain: Cysteine desulfurase IscS (387 aa).

Pyridoxal 5'-phosphate contacts are provided by residues 73 to 74 (AT), asparagine 155, glutamine 183, and 203 to 205 (SAH). Residue lysine 206 is modified to N6-(pyridoxal phosphate)lysine. Residue threonine 241 participates in pyridoxal 5'-phosphate binding. The active-site Cysteine persulfide intermediate is the cysteine 328. Cysteine 328 lines the [2Fe-2S] cluster pocket.

It belongs to the class-V pyridoxal-phosphate-dependent aminotransferase family. NifS/IscS subfamily. Homodimer. Forms a heterotetramer with IscU, interacts with other sulfur acceptors. Pyridoxal 5'-phosphate is required as a cofactor.

It is found in the cytoplasm. The enzyme catalyses (sulfur carrier)-H + L-cysteine = (sulfur carrier)-SH + L-alanine. Its pathway is cofactor biosynthesis; iron-sulfur cluster biosynthesis. In terms of biological role, master enzyme that delivers sulfur to a number of partners involved in Fe-S cluster assembly, tRNA modification or cofactor biosynthesis. Catalyzes the removal of elemental sulfur atoms from cysteine to produce alanine. Functions as a sulfur delivery protein for Fe-S cluster synthesis onto IscU, an Fe-S scaffold assembly protein, as well as other S acceptor proteins. This is Cysteine desulfurase IscS from Helicobacter pylori (strain J99 / ATCC 700824) (Campylobacter pylori J99).